The following is a 66-amino-acid chain: Small ribosomal subunit protein eS30 (66 aa).

Residues 1–35 (MGKVHGGLNRAGKVRNATPKKDKEEKRKPKVGRAK) form a disordered region.

This sequence belongs to the eukaryotic ribosomal protein eS30 family.

This chain is Small ribosomal subunit protein eS30 (rps30-1), found in Dictyostelium discoideum (Social amoeba).